The sequence spans 231 residues: L-ribulose-5-phosphate 4-epimerase SgbE (231 aa).

Substrate contacts are provided by residues 27-28 (GN), 44-45 (SG), and 74-75 (SS). Zn(2+) contacts are provided by D76, H95, and H97. The Proton donor/acceptor role is filled by D120. H171 contacts Zn(2+). Y229 (proton donor/acceptor) is an active-site residue.

The protein belongs to the aldolase class II family. AraD/FucA subfamily. Requires Zn(2+) as cofactor.

The enzyme catalyses L-ribulose 5-phosphate = D-xylulose 5-phosphate. Functionally, catalyzes the interconversion of L-ribulose 5-phosphate (LRu5P) and D-xylulose 5-phosphate (D-Xu5P) via a retroaldol/aldol mechanism (carbon-carbon bond cleavage analogous to a class II aldolase reaction). May be involved in the utilization of 2,3-diketo-L-gulonate. The sequence is that of L-ribulose-5-phosphate 4-epimerase SgbE from Escherichia coli (strain K12).